The primary structure comprises 445 residues: Argininosuccinate synthase (445 aa).

ATP-binding positions include 17-25 (AFSGGLDTS) and alanine 43. Tyrosine 99 is an L-citrulline binding site. ATP contacts are provided by glycine 129 and threonine 131. 3 residues coordinate L-aspartate: threonine 131, asparagine 135, and aspartate 136. Asparagine 135 contributes to the L-citrulline binding site. Residue aspartate 136 participates in ATP binding. The L-citrulline site is built by arginine 139 and serine 192. Aspartate 194 serves as a coordination point for ATP. Threonine 201, glutamate 203, and glutamate 280 together coordinate L-citrulline.

Belongs to the argininosuccinate synthase family. Type 2 subfamily. Homotetramer.

The protein localises to the cytoplasm. It carries out the reaction L-citrulline + L-aspartate + ATP = 2-(N(omega)-L-arginino)succinate + AMP + diphosphate + H(+). It participates in amino-acid biosynthesis; L-arginine biosynthesis; L-arginine from L-ornithine and carbamoyl phosphate: step 2/3. This chain is Argininosuccinate synthase, found in Afipia carboxidovorans (strain ATCC 49405 / DSM 1227 / KCTC 32145 / OM5) (Oligotropha carboxidovorans).